The chain runs to 280 residues: uncharacterized protein (280 aa).

Positions 1–21 (MRPAIKVGLSTASVYPLRAEA) are cleaved as a signal peptide.

The protein to M.leprae ML2432 and S.coelicolor SCO3347.

This is an uncharacterized protein from Mycobacterium tuberculosis (strain CDC 1551 / Oshkosh).